The sequence spans 80 residues: Defensin-like protein 204 (80 aa).

An N-terminal signal peptide occupies residues 1–29; that stretch reads MAKTFSSICFTTLLLVVLFISTEIPKSEA. Cystine bridges form between cysteine 43/cysteine 64, cysteine 48/cysteine 73, and cysteine 52/cysteine 75.

This sequence belongs to the DEFL family.

It localises to the secreted. The polypeptide is Defensin-like protein 204 (Arabidopsis thaliana (Mouse-ear cress)).